A 214-amino-acid polypeptide reads, in one-letter code: Attacin (214 aa).

The N-terminal stretch at 1-19 (MSKSVALLLLCACLASGRH) is a signal peptide. Residues 20-26 (VPTRARR) constitute a propeptide that is removed on maturation.

The protein belongs to the attacin/sarcotoxin-2 family. As to expression, highest expression in fat body and hemocytes and to a much lesser extent in Malpighian tubules, silk gland and midgut.

It is found in the secreted. In terms of biological role, hemolymph antibacterial protein. Has a wide spectrum of activity against both Gram-positive and Gram-negative bacteria. The polypeptide is Attacin (Bombyx mori (Silk moth)).